The following is a 553-amino-acid chain: CTP synthase (553 aa).

Residues 1 to 270 (MTKYVFVTGG…DRLICEELRL (270 aa)) form an amidoligase domain region. A CTP-binding site is contributed by serine 13. Serine 13 contributes to the UTP binding site. ATP is bound by residues 14–19 (SLGKGI) and aspartate 71. Mg(2+)-binding residues include aspartate 71 and glutamate 144. CTP contacts are provided by residues 151-153 (DIE), 191-196 (KTKPTQ), and lysine 227. Residues 191 to 196 (KTKPTQ) and lysine 227 contribute to the UTP site. Positions 295 to 547 (TIGMVGKYVD…VQAALACQQT (253 aa)) constitute a Glutamine amidotransferase type-1 domain. Glycine 356 is an L-glutamine binding site. Cysteine 383 serves as the catalytic Nucleophile; for glutamine hydrolysis. Residues 384 to 387 (LGMQ), glutamate 407, and arginine 473 each bind L-glutamine. Residues histidine 520 and glutamate 522 contribute to the active site.

It belongs to the CTP synthase family. In terms of assembly, homotetramer.

It catalyses the reaction UTP + L-glutamine + ATP + H2O = CTP + L-glutamate + ADP + phosphate + 2 H(+). The enzyme catalyses L-glutamine + H2O = L-glutamate + NH4(+). The catalysed reaction is UTP + NH4(+) + ATP = CTP + ADP + phosphate + 2 H(+). The protein operates within pyrimidine metabolism; CTP biosynthesis via de novo pathway; CTP from UDP: step 2/2. With respect to regulation, allosterically activated by GTP, when glutamine is the substrate; GTP has no effect on the reaction when ammonia is the substrate. The allosteric effector GTP functions by stabilizing the protein conformation that binds the tetrahedral intermediate(s) formed during glutamine hydrolysis. Inhibited by the product CTP, via allosteric rather than competitive inhibition. Catalyzes the ATP-dependent amination of UTP to CTP with either L-glutamine or ammonia as the source of nitrogen. Regulates intracellular CTP levels through interactions with the four ribonucleotide triphosphates. In Burkholderia mallei (strain NCTC 10247), this protein is CTP synthase.